The following is a 92-amino-acid chain: Small ribosomal subunit protein uS19 (92 aa).

Protein S19 forms a complex with S13 that binds strongly to the 16S ribosomal RNA. The chain is Small ribosomal subunit protein uS19 from Rhodopseudomonas palustris (strain ATCC BAA-98 / CGA009).